The following is a 141-amino-acid chain: Large ribosomal subunit protein uL11 (141 aa).

It belongs to the universal ribosomal protein uL11 family. In terms of assembly, part of the ribosomal stalk of the 50S ribosomal subunit. Interacts with L10 and the large rRNA to form the base of the stalk. L10 forms an elongated spine to which L12 dimers bind in a sequential fashion forming a multimeric L10(L12)X complex. In terms of processing, one or more lysine residues are methylated.

Its function is as follows. Forms part of the ribosomal stalk which helps the ribosome interact with GTP-bound translation factors. The protein is Large ribosomal subunit protein uL11 of Prochlorococcus marinus subsp. pastoris (strain CCMP1986 / NIES-2087 / MED4).